The primary structure comprises 146 residues: 3-dehydroquinate dehydratase (146 aa).

Tyrosine 22 (proton acceptor) is an active-site residue. Residues asparagine 73, histidine 79, and aspartate 86 each contribute to the substrate site. Catalysis depends on histidine 99, which acts as the Proton donor. Substrate-binding positions include 100–101 (IS) and arginine 110.

This sequence belongs to the type-II 3-dehydroquinase family. As to quaternary structure, homododecamer.

It carries out the reaction 3-dehydroquinate = 3-dehydroshikimate + H2O. The protein operates within metabolic intermediate biosynthesis; chorismate biosynthesis; chorismate from D-erythrose 4-phosphate and phosphoenolpyruvate: step 3/7. Functionally, catalyzes a trans-dehydration via an enolate intermediate. The protein is 3-dehydroquinate dehydratase of Prochlorococcus marinus (strain MIT 9515).